The following is a 270-amino-acid chain: Putative pyruvate, phosphate dikinase regulatory protein (270 aa).

151-158 contributes to the ADP binding site; sequence GVSRTSKT.

The protein belongs to the pyruvate, phosphate/water dikinase regulatory protein family. PDRP subfamily.

The catalysed reaction is N(tele)-phospho-L-histidyl/L-threonyl-[pyruvate, phosphate dikinase] + ADP = N(tele)-phospho-L-histidyl/O-phospho-L-threonyl-[pyruvate, phosphate dikinase] + AMP + H(+). The enzyme catalyses N(tele)-phospho-L-histidyl/O-phospho-L-threonyl-[pyruvate, phosphate dikinase] + phosphate + H(+) = N(tele)-phospho-L-histidyl/L-threonyl-[pyruvate, phosphate dikinase] + diphosphate. Bifunctional serine/threonine kinase and phosphorylase involved in the regulation of the pyruvate, phosphate dikinase (PPDK) by catalyzing its phosphorylation/dephosphorylation. The polypeptide is Putative pyruvate, phosphate dikinase regulatory protein (Streptococcus gordonii (strain Challis / ATCC 35105 / BCRC 15272 / CH1 / DL1 / V288)).